Here is a 219-residue protein sequence, read N- to C-terminus: Sugar transporter SWEET1 (219 aa).

A run of 7 helical transmembrane segments spans residues 3–23, 38–58, 63–83, 98–118, 125–145, 156–176, and 189–209; these read FLQLLSCACIIFTVGMFTTGL, VQFLPFLTTCLNNLGWLYYGL, GTVIFVNIIGAFLQTVYIATY, LLMVSVLCVAWVYFSLVISPG, LGLTCSVFTISMYLSPLADLL, LSFSLTVATFFTSTSWTLYGL, and PGIFTSLIRFFLFWWFGAVIP. Residues 5-90 enclose the MtN3/slv 1 domain; sequence QLLSCACIIF…ATYCHYTKEK (86 aa). Positions 124-204 constitute a MtN3/slv 2 domain; the sequence is QLGLTCSVFT…LIRFFLFWWF (81 aa).

Belongs to the SWEET sugar transporter family.

The protein localises to the golgi apparatus membrane. It localises to the cell membrane. In terms of biological role, mediates sugar transport across membranes. This chain is Sugar transporter SWEET1 (slc50a1), found in Danio rerio (Zebrafish).